We begin with the raw amino-acid sequence, 1046 residues long: Inner tegument protein (1046 aa).

An interaction with large tegument protein region spans residues 543 to 1046 (WGIVPPDESN…TGRRANGDNA (504 aa)).

It belongs to the herpesviridae inner tegument protein family. In terms of assembly, interacts (via C-terminus) with the large tegument protein/LTP (via N-terminus).

It localises to the virion tegument. The protein resides in the host cytoplasm. It is found in the host nucleus. Its subcellular location is the host Golgi apparatus. The protein localises to the host trans-Golgi network. Its function is as follows. Plays an essential role in cytoplasmic secondary envelopment during viral egress. Interacts with the capsid via the large tegument protein/LTP and participates in its transport to the host trans-Golgi network (TGN) where secondary envelopment occurs. Modulates tegumentation and capsid accumulation at the viral assembly complex. This Gallid herpesvirus 2 (strain Chicken/Md5/ATCC VR-987) (GaHV-2) protein is Inner tegument protein (MDV050).